Reading from the N-terminus, the 103-residue chain is Small ribosomal subunit protein uS10 (103 aa).

It belongs to the universal ribosomal protein uS10 family. Part of the 30S ribosomal subunit.

Functionally, involved in the binding of tRNA to the ribosomes. The polypeptide is Small ribosomal subunit protein uS10 (Paraburkholderia xenovorans (strain LB400)).